Here is a 302-residue protein sequence, read N- to C-terminus: Sulfate adenylyltransferase subunit 2 (302 aa).

Belongs to the PAPS reductase family. CysD subfamily. In terms of assembly, heterodimer composed of CysD, the smaller subunit, and CysN.

The enzyme catalyses sulfate + ATP + H(+) = adenosine 5'-phosphosulfate + diphosphate. Its pathway is sulfur metabolism; hydrogen sulfide biosynthesis; sulfite from sulfate: step 1/3. In terms of biological role, with CysN forms the ATP sulfurylase (ATPS) that catalyzes the adenylation of sulfate producing adenosine 5'-phosphosulfate (APS) and diphosphate, the first enzymatic step in sulfur assimilation pathway. APS synthesis involves the formation of a high-energy phosphoric-sulfuric acid anhydride bond driven by GTP hydrolysis by CysN coupled to ATP hydrolysis by CysD. The chain is Sulfate adenylyltransferase subunit 2 from Psychromonas ingrahamii (strain DSM 17664 / CCUG 51855 / 37).